The primary structure comprises 79 residues: Protein VdcD (79 aa).

In terms of biological role, involved in the non-oxidative decarboxylation and detoxification of phenolic derivatives under both aerobic and anaerobic conditions, however the precise biochemical function of VdcD in metabolism of phenolic acid is unknown. The protein is Protein VdcD of Streptomyces sp. (strain D7).